The chain runs to 126 residues: MDVSQPRIQIQVHTKYVEEQSNPELARYIFAYIITIKNHSSESVQLLSRRWLITDANGKQISVEGDGVVGQQPFIDAGDEYTYSSGTALDTPVGVMQGQYIMHDAQGKEFVVEIEPFRLAVPNILN.

Residues 2-126 (DVSQPRIQIQ…FRLAVPNILN (125 aa)) enclose the ApaG domain.

This is Protein ApaG from Vibrio vulnificus (strain CMCP6).